A 165-amino-acid chain; its full sequence is UPF0254 protein MmarC5_0742 (165 aa).

The protein belongs to the UPF0254 family.

This chain is UPF0254 protein MmarC5_0742, found in Methanococcus maripaludis (strain C5 / ATCC BAA-1333).